Here is a 504-residue protein sequence, read N- to C-terminus: Ammonium transporter 1 member 4 (504 aa).

Transmembrane regions (helical) follow at residues 12–32 (LIPL…AEYI), 55–75 (LLFS…LCAG), 90–110 (VIDA…FAFG), 136–156 (YFLY…GSIA), 161–181 (FVAY…IVSH), 207–227 (FAGS…GALI), 251–271 (LVVL…PGSF), 292–314 (AVGR…TLFG), 318–338 (IDGY…FAAI), 344–364 (VVEP…LMGC), 377–397 (LEAA…TGLF), and 430–450 (VVQI…LFFI). Residue Thr-471 is modified to Phosphothreonine.

This sequence belongs to the ammonia transporter channel (TC 1.A.11.2) family. Specifically expressed in pollen grains and tubes.

It is found in the cell membrane. In terms of biological role, high affinity ammonium transporter in the plasma membrane. In Arabidopsis thaliana (Mouse-ear cress), this protein is Ammonium transporter 1 member 4 (AMT1-4).